Reading from the N-terminus, the 419-residue chain is L-rhamnose isomerase (419 aa).

Mn(2+) is bound by residues histidine 262, aspartate 294, and aspartate 296.

This sequence belongs to the rhamnose isomerase family. In terms of assembly, homotetramer. Mn(2+) is required as a cofactor.

The protein resides in the cytoplasm. The enzyme catalyses L-rhamnopyranose = L-rhamnulose. It functions in the pathway carbohydrate degradation; L-rhamnose degradation; glycerone phosphate from L-rhamnose: step 1/3. In terms of biological role, catalyzes the interconversion of L-rhamnose and L-rhamnulose. The sequence is that of L-rhamnose isomerase from Escherichia coli (strain SMS-3-5 / SECEC).